The sequence spans 72 residues: ATP synthase subunit L (72 aa).

F-type ATP synthases have 2 components, the catalytic core F(1) and the membrane-embedded component F(0), linked together by a central stalk and a peripheral stalk. The central stalk, also called rotor shaft, is often seen as part of F(1). The peripheral stalk is seen as part of F(0). F(0) contains the membrane channel next to the rotor. F-type ATP synthases form dimers but each monomer functions independently in ATP generation. The dimer consists of 18 different polypeptides: ATP1 (subunit alpha, part of F(1), 3 molecules per monomer), ATP2 (subunit beta, part of F(1), 3 molecules per monomer), ATP3 (subunit gamma, part of the central stalk), ATP4 (subunit b, part of the peripheral stalk), ATP5/OSCP (subunit 5/OSCP, part of the peripheral stalk), ATP6 (subunit a, part of the peripheral stalk), ATP7 (subunit d, part of the peripheral stalk), ATP8 (subunit 8, part of the peripheral stalk), OLI1 (subunit c, part of the rotor, 10 molecules per monomer), ATP14 (subunit h, part of the peripheral stalk), ATP15 (subunit epsilon, part of the central stalk), ATP16 (subunit delta, part of the central stalk), ATP17 (subunit f, part of the peripheral stalk), ATP18 (subunit i/j, part of the peripheral stalk). Dimer-specific subunits are ATP19 (subunit k, at interface between monomers), ATP20 (subunit g, at interface between monomers), TIM11 (subunit e, at interface between monomers). Also contains subunit L.

The protein resides in the mitochondrion inner membrane. Functionally, mitochondrial membrane ATP synthase (F(1)F(0) ATP synthase or Complex V) produces ATP from ADP in the presence of a proton gradient across the membrane which is generated by electron transport complexes of the respiratory chain. F-type ATP synthases consist of two structural domains, F(1) - containing the extramembraneous catalytic core, and F(0) - containing the membrane proton channel, linked together by a central stalk and a peripheral stalk. During catalysis, ATP synthesis in the catalytic domain of F(1) is coupled via a rotary mechanism of the central stalk subunits to proton translocation. The protein is ATP synthase subunit L of Pichia angusta (Yeast).